The following is a 137-amino-acid chain: 5-hydroxytryptamine receptor 4 (137 aa).

The helical transmembrane segment at 12–35 (TPLRVAVLLAGCWAIPVLISFLPI) threads the bilayer. N-linked (GlcNAc...) asparagine glycosylation occurs at N58. The helical transmembrane segment at 67–90 (NKPYAITCSVVAFYIPFLLMVLAY) threads the bilayer. The disordered stretch occupies residues 112–137 (APAEGRPPSADQHSTHRMRTETKAAK).

This sequence belongs to the G-protein coupled receptor 1 family. In terms of assembly, interacts (via C-terminus 330-346 AA) with GRK5; this interaction is promoted by 5-HT (serotonin).

Its subcellular location is the cell membrane. The protein localises to the endosome membrane. G-protein coupled receptor for 5-hydroxytryptamine (serotonin), a biogenic hormone that functions as a neurotransmitter, a hormone and a mitogen. Ligand binding causes a conformation change that triggers signaling via guanine nucleotide-binding proteins (G proteins) and modulates the activity of downstream effectors. HTR4 is coupled to G(s) G alpha proteins and mediates activation of adenylate cyclase activity. The polypeptide is 5-hydroxytryptamine receptor 4 (HTR4) (Sus scrofa (Pig)).